The chain runs to 354 residues: Uroporphyrinogen decarboxylase (354 aa).

Residues 25 to 29, Phe44, Asp75, Tyr152, Thr207, and His330 each bind substrate; that span reads RQAGR.

It belongs to the uroporphyrinogen decarboxylase family. Homodimer.

It is found in the cytoplasm. The enzyme catalyses uroporphyrinogen III + 4 H(+) = coproporphyrinogen III + 4 CO2. It functions in the pathway porphyrin-containing compound metabolism; protoporphyrin-IX biosynthesis; coproporphyrinogen-III from 5-aminolevulinate: step 4/4. Functionally, catalyzes the decarboxylation of four acetate groups of uroporphyrinogen-III to yield coproporphyrinogen-III. The polypeptide is Uroporphyrinogen decarboxylase (Xanthomonas axonopodis pv. citri (strain 306)).